Reading from the N-terminus, the 67-residue chain is Small ribosomal subunit protein eS31 (67 aa).

Zn(2+) is bound by residues Cys-35, Cys-38, Cys-54, and Cys-57. Residues Cys-35–Cys-57 form a C4-type zinc finger.

This sequence belongs to the eukaryotic ribosomal protein eS31 family. Part of the 30S ribosomal subunit. Zn(2+) serves as cofactor.

The chain is Small ribosomal subunit protein eS31 from Sulfolobus acidocaldarius (strain ATCC 33909 / DSM 639 / JCM 8929 / NBRC 15157 / NCIMB 11770).